We begin with the raw amino-acid sequence, 323 residues long: Sodium/potassium-transporting ATPase subunit beta-2 (323 aa).

The Cytoplasmic segment spans residues 1–50 (MPTITEDCIDGFQQYYSRPPERPKKKSLKQMVYDSEDNSYFGRSMDSWAK). The helical; Signal-anchor for type II membrane protein transmembrane segment at 51-71 (IGIFYVAFYGVLAALVAICMW) threads the bilayer. Over 72–323 (AFFQTLDPRI…GSVHYELLID (252 aa)) the chain is Extracellular. 2 disulfide bridges follow: Cys-153-Cys-165 and Cys-175-Cys-189. N-linked (GlcNAc...) asparagine glycosylation is found at Asn-180 and Asn-206. A disulfide bond links Cys-241 and Cys-298.

Belongs to the X(+)/potassium ATPases subunit beta family. As to quaternary structure, the sodium/potassium-transporting ATPase is composed of a catalytic alpha subunit, an auxiliary non-catalytic beta subunit and an additional regulatory subunit. In terms of tissue distribution, in embryos, it is expressed in the neurons of the CNS and PNS, in Garland cells and posterior spiracles. In adults, it shows a nervous system specific distribution: optic lobes, brain, thoracic ganglia and axonal pathways in the leg. Both isoforms concentrate in the adult head, isoform 2.2 being predominant. Both isoforms are weakly expressed in the thorax and very poorly expressed in the abdomen.

It localises to the cell membrane. Its function is as follows. This is the non-catalytic component of the active enzyme, which catalyzes the hydrolysis of ATP coupled with the exchange of Na(+) and K(+) ions across the plasma membrane. The beta subunit regulates, through assembly of alpha/beta heterodimers, the number of sodium pumps transported to the plasma membrane. The protein is Sodium/potassium-transporting ATPase subunit beta-2 (nrv2) of Drosophila melanogaster (Fruit fly).